The primary structure comprises 185 residues: Ethylene-responsive transcription factor ERF017 (185 aa).

A DNA-binding region (AP2/ERF) is located at residues 11–68 (KYKGVRKRKWGKWVSEIRLPNSRERIWLGSYDTPEKAARAFDAALYCLRGNNAKFNFP).

The protein belongs to the AP2/ERF transcription factor family. ERF subfamily.

It localises to the nucleus. Probably acts as a transcriptional activator. Binds to the GCC-box pathogenesis-related promoter element. May be involved in the regulation of gene expression by stress factors and by components of stress signal transduction pathways. The protein is Ethylene-responsive transcription factor ERF017 (ERF017) of Arabidopsis thaliana (Mouse-ear cress).